A 462-amino-acid chain; its full sequence is Glycine--tRNA ligase (462 aa).

Substrate-binding residues include Arg-100 and Glu-175. Residues 207–209 (RNE), 217–222 (FRTREF), 291–292 (EL), and 335–338 (GADR) each bind ATP. Position 222–226 (222–226 (FEQME)) interacts with substrate. Position 331 to 335 (331 to 335 (EPSLG)) interacts with substrate.

The protein belongs to the class-II aminoacyl-tRNA synthetase family. As to quaternary structure, homodimer.

The protein localises to the cytoplasm. It catalyses the reaction tRNA(Gly) + glycine + ATP = glycyl-tRNA(Gly) + AMP + diphosphate. In terms of biological role, catalyzes the attachment of glycine to tRNA(Gly). The chain is Glycine--tRNA ligase from Clostridium acetobutylicum (strain ATCC 824 / DSM 792 / JCM 1419 / IAM 19013 / LMG 5710 / NBRC 13948 / NRRL B-527 / VKM B-1787 / 2291 / W).